We begin with the raw amino-acid sequence, 40 residues long: Large ribosomal subunit protein bL36A (40 aa).

The protein belongs to the bacterial ribosomal protein bL36 family.

This Saccharopolyspora erythraea (strain ATCC 11635 / DSM 40517 / JCM 4748 / NBRC 13426 / NCIMB 8594 / NRRL 2338) protein is Large ribosomal subunit protein bL36A.